Here is a 156-residue protein sequence, read N- to C-terminus: MQVTEGQLVALQDARFALVAARFNDLIVDRLIDGAADTLRRHGVPEEHLELIRVPGSFELPLAVQRVADAGRADAVIALGAVIRGGTDHHQYVAAECTKGVAQAMMGSGVPVSYGVLTVETVEQAIERAGTKAGNKGAEAALSALEMVDLMRQLEA.

Residues Phe23, 57-59 (SFE), and 81-83 (AVI) each bind 5-amino-6-(D-ribitylamino)uracil. 86 to 87 (GT) contributes to the (2S)-2-hydroxy-3-oxobutyl phosphate binding site. His89 acts as the Proton donor in catalysis. Residue Tyr114 participates in 5-amino-6-(D-ribitylamino)uracil binding. Arg128 serves as a coordination point for (2S)-2-hydroxy-3-oxobutyl phosphate.

The protein belongs to the DMRL synthase family. Forms an icosahedral capsid composed of 60 subunits, arranged as a dodecamer of pentamers.

The catalysed reaction is (2S)-2-hydroxy-3-oxobutyl phosphate + 5-amino-6-(D-ribitylamino)uracil = 6,7-dimethyl-8-(1-D-ribityl)lumazine + phosphate + 2 H2O + H(+). It participates in cofactor biosynthesis; riboflavin biosynthesis; riboflavin from 2-hydroxy-3-oxobutyl phosphate and 5-amino-6-(D-ribitylamino)uracil: step 1/2. Catalyzes the formation of 6,7-dimethyl-8-ribityllumazine by condensation of 5-amino-6-(D-ribitylamino)uracil with 3,4-dihydroxy-2-butanone 4-phosphate. This is the penultimate step in the biosynthesis of riboflavin. This is 6,7-dimethyl-8-ribityllumazine synthase from Halorhodospira halophila (strain DSM 244 / SL1) (Ectothiorhodospira halophila (strain DSM 244 / SL1)).